The chain runs to 498 residues: AP2-like ethylene-responsive transcription factor AIL7 (498 aa).

A compositionally biased stretch (polar residues) spans 186–195; that stretch reads TSDQPLSCNN. Residues 186 to 220 are disordered; that stretch reads TSDQPLSCNNGERGGNSNKKKTVSKKETSDDSKKK. The segment covering 209-220 has biased composition (basic and acidic residues); the sequence is SKKETSDDSKKK. DNA-binding regions (AP2/ERF) lie at residues 231–297 and 333–391; these read IYRG…TNFP and IYRG…TNFE. The segment covering 422–451 has biased composition (low complexity); sequence ESPSSSSSDHNLQQQQLLPSSSPSDQNPNS. The segment at 422 to 452 is disordered; that stretch reads ESPSSSSSDHNLQQQQLLPSSSPSDQNPNSI.

The protein belongs to the AP2/ERF transcription factor family. AP2 subfamily. Interacts with HDG2, and possibly with HDG3, HDG7, ANL2, ATML1 and PDF2. In terms of tissue distribution, expressed in roots, seedlings, inflorescence, and siliques. Also detected at low levels in leaves.

It localises to the nucleus. In terms of biological role, probably acts as a transcriptional activator. Binds to the GCC-box pathogenesis-related promoter element. May be involved in the regulation of gene expression by stress factors and by components of stress signal transduction pathways. The chain is AP2-like ethylene-responsive transcription factor AIL7 from Arabidopsis thaliana (Mouse-ear cress).